The following is a 61-amino-acid chain: Large ribosomal subunit protein uL30 (61 aa).

This sequence belongs to the universal ribosomal protein uL30 family. In terms of assembly, part of the 50S ribosomal subunit.

This is Large ribosomal subunit protein uL30 from Neisseria gonorrhoeae (strain ATCC 700825 / FA 1090).